The primary structure comprises 440 residues: Ribosomal protein uS12 methylthiotransferase RimO (440 aa).

One can recognise an MTTase N-terminal domain in the interval 5 to 116; that stretch reads PTIAISHLGC…IVSVIERAEQ (112 aa). [4Fe-4S] cluster-binding residues include C14, C50, C79, C154, C158, and C161. The region spanning 140–370 is the Radical SAM core domain; sequence TTTEGVAYLR…ALQQPISWRK (231 aa). The TRAM domain maps to 372–438; it reads QQEVGKTVEV…EYDLFGQVVS (67 aa).

This sequence belongs to the methylthiotransferase family. RimO subfamily. [4Fe-4S] cluster serves as cofactor.

Its subcellular location is the cytoplasm. The enzyme catalyses L-aspartate(89)-[ribosomal protein uS12]-hydrogen + (sulfur carrier)-SH + AH2 + 2 S-adenosyl-L-methionine = 3-methylsulfanyl-L-aspartate(89)-[ribosomal protein uS12]-hydrogen + (sulfur carrier)-H + 5'-deoxyadenosine + L-methionine + A + S-adenosyl-L-homocysteine + 2 H(+). Functionally, catalyzes the methylthiolation of an aspartic acid residue of ribosomal protein uS12. This is Ribosomal protein uS12 methylthiotransferase RimO from Nostoc sp. (strain PCC 7120 / SAG 25.82 / UTEX 2576).